The chain runs to 459 residues: Cysteine--tRNA ligase (459 aa).

Cys-31 contributes to the Zn(2+) binding site. A 'HIGH' region motif is present at residues 33–43 (PTVYYNPHIGN). Residues Cys-216, His-241, and Glu-245 each coordinate Zn(2+). Positions 274 to 278 (KMSKS) match the 'KMSKS' region motif. Lys-277 serves as a coordination point for ATP.

The protein belongs to the class-I aminoacyl-tRNA synthetase family. In terms of assembly, monomer. The cofactor is Zn(2+).

The protein localises to the cytoplasm. The enzyme catalyses tRNA(Cys) + L-cysteine + ATP = L-cysteinyl-tRNA(Cys) + AMP + diphosphate. This chain is Cysteine--tRNA ligase, found in Rickettsia peacockii (strain Rustic).